Reading from the N-terminus, the 113-residue chain is Hydrogenase maturation factor HypA 2 (113 aa).

A Ni(2+)-binding site is contributed by H2. 4 residues coordinate Zn(2+): C73, C76, C89, and C92.

The protein belongs to the HypA/HybF family.

Involved in the maturation of [NiFe] hydrogenases. Required for nickel insertion into the metal center of the hydrogenase. The sequence is that of Hydrogenase maturation factor HypA 2 from Bradyrhizobium diazoefficiens (strain JCM 10833 / BCRC 13528 / IAM 13628 / NBRC 14792 / USDA 110).